The chain runs to 232 residues: Syntaxin-51 (232 aa).

Residues 1-208 (MASSSDSWMR…NKNMRSGCSC (208 aa)) are Cytoplasmic-facing. The 63-residue stretch at 136 to 198 (RQVMREQDEG…RRVQKSLAVM (63 aa)) folds into the t-SNARE coiled-coil homology domain. A helical; Anchor for type IV membrane protein membrane pass occupies residues 209–229 (MSMLLSVLGIVGLAVVIWMLV). Over 230–232 (KYM) the chain is Vesicular.

It belongs to the syntaxin family. In terms of assembly, interacts with VTI11 and either SYP21, or SYP22, or SYP61 in the prevacuolar compartment, or with VTI12 and SYP61 in the trans-Golgi network to form t-SNARE complexes. Expressed in root, leaf, stem, flower and silique.

The protein localises to the golgi apparatus. Its subcellular location is the trans-Golgi network membrane. It localises to the prevacuolar compartment membrane. Vesicle trafficking protein that functions in the secretory pathway. This Arabidopsis thaliana (Mouse-ear cress) protein is Syntaxin-51 (SYP51).